Consider the following 32-residue polypeptide: DNA-binding protein HU (32 aa).

The protein belongs to the bacterial histone-like protein family.

Its function is as follows. Histone-like DNA-binding protein which is capable of wrapping DNA to stabilize it, and thus to prevent its denaturation under extreme environmental conditions. This chain is DNA-binding protein HU (hup), found in Synechocystis sp. (strain PCC 6701).